A 303-amino-acid chain; its full sequence is MKMIETSLASASAALRDRVDEILAAATREDGCAPLSESFLNGLRRADDGHVHSCVMDSHDQVVGVAARDGDSAEVVVDPAFRRQGYGSFLIRHVVSQGVKNVWAHGDGAGAKAVAKALQLEQTRQLLVMAVEGDRLVESAQLQVPSGFRVLALNEAYESIPDIEQQWLRVNNEAFEWHPEQGGWDSARLAQARDTQWFRESDVLFLIDTAKRTVAGFHWTKRHGDLAEGADGEVYVVGLGSAYRRRGLGDLLIRMGLHHLEYEHARRVILYVEGDNESARRAYDALGFHVVESHVTYSPQSSS.

N-acetyltransferase domains are found at residues 6–134 (TSLA…VEGD) and 154–303 (NEAY…QSSS). Glutamate 37 provides a ligand contact to 1D-myo-inositol 2-(L-cysteinylamino)-2-deoxy-alpha-D-glucopyranoside. Residues 75 to 77 (VVV) and 83 to 88 (RQGYGS) each bind acetyl-CoA. 1D-myo-inositol 2-(L-cysteinylamino)-2-deoxy-alpha-D-glucopyranoside-binding residues include glutamate 180, lysine 221, and glutamate 233. Acetyl-CoA-binding positions include 237 to 239 (VGL) and 244 to 250 (RRRGLGD). Tyrosine 271 contributes to the 1D-myo-inositol 2-(L-cysteinylamino)-2-deoxy-alpha-D-glucopyranoside binding site. Residue 276-281 (NESARR) coordinates acetyl-CoA.

The protein belongs to the acetyltransferase family. MshD subfamily. As to quaternary structure, monomer.

It carries out the reaction 1D-myo-inositol 2-(L-cysteinylamino)-2-deoxy-alpha-D-glucopyranoside + acetyl-CoA = mycothiol + CoA + H(+). Functionally, catalyzes the transfer of acetyl from acetyl-CoA to desacetylmycothiol (Cys-GlcN-Ins) to form mycothiol. The protein is Mycothiol acetyltransferase of Corynebacterium diphtheriae (strain ATCC 700971 / NCTC 13129 / Biotype gravis).